The chain runs to 402 residues: Type II NADH:quinone oxidoreductase (402 aa).

Residues 12–16 (GAGYA), 39–40 (NK), and Val-83 contribute to the FAD site. Glu-172 is an active-site residue. FAD-binding positions include Asp-302, 319 to 320 (AQ), and Lys-379.

The protein belongs to the NADH dehydrogenase family. Requires FAD as cofactor.

The protein localises to the cell membrane. It catalyses the reaction a quinone + NADH + H(+) = a quinol + NAD(+). Its function is as follows. Alternative, nonproton pumping NADH:quinone oxidoreductase that delivers electrons to the respiratory chain by oxidation of NADH and reduction of quinones, and contributes to the regeneration of NAD(+). The polypeptide is Type II NADH:quinone oxidoreductase (Staphylococcus epidermidis (strain ATCC 12228 / FDA PCI 1200)).